The sequence spans 1313 residues: Target of rapamycin complex 1 subunit mip1 (1313 aa).

The disordered stretch occupies residues 1-35; sequence MNDRISEVSGSSRARRSVLSYGTTETGSDRYTENS. Phosphoserine occurs at positions 834, 837, and 882. 7 WD repeats span residues 986–1029, 1033–1074, 1087–1126, 1130–1170, 1176–1216, 1219–1259, and 1268–1308; these read TFNN…NSFK, SATT…KVEL, GDRN…CYAN, RSSN…RDSL, EHSS…SLQT, TDNS…NTFR, and PKPS…IHTD.

It belongs to the WD repeat RAPTOR family. In terms of assembly, the target of rapamycin complex 1 (TORC1) is composed of at least mip1, pop3/wat1, tco89, toc1 and tor2.

Its subcellular location is the cytoplasm. Its function is as follows. Component of TORC1, which regulates multiple cellular processes to control cell growth in response to environmental signals. Tor2 is essential for growth. Nutrient limitation and environmental stress signals cause inactivation of TORC1. Active TORC1 positively controls cell growth and ribosome biogenesis by regulating ribosomal protein gene expression. TORC1 negatively controls G1 cell-cycle arrest, sexual development and amino acid uptake. Represses mating, meiosis and sporulation efficiency by interfering with the functions of the transcription factor ste11 and the meiosis-promoting RNA-binding protein mei2. This chain is Target of rapamycin complex 1 subunit mip1, found in Schizosaccharomyces pombe (strain 972 / ATCC 24843) (Fission yeast).